An 88-amino-acid chain; its full sequence is Small ribosomal subunit protein uS15 (88 aa).

Belongs to the universal ribosomal protein uS15 family. As to quaternary structure, part of the 30S ribosomal subunit. Forms a bridge to the 50S subunit in the 70S ribosome, contacting the 23S rRNA.

Functionally, one of the primary rRNA binding proteins, it binds directly to 16S rRNA where it helps nucleate assembly of the platform of the 30S subunit by binding and bridging several RNA helices of the 16S rRNA. Forms an intersubunit bridge (bridge B4) with the 23S rRNA of the 50S subunit in the ribosome. This is Small ribosomal subunit protein uS15 from Mycoplasma mycoides subsp. mycoides SC (strain CCUG 32753 / NCTC 10114 / PG1).